The chain runs to 315 residues: MKLKMLLLSSTPPGSPGGQTDPDTSSKTPTTTTAATDTSPRRQSINKQSQQTETKRRGYGRRPSSRTRRPQTHQRRSRSRSRSRSSSQTHSSTTTTTTTYRSRSTSLNKTRARSRSRSTSRSTSTTSRRGGRGSSTRQRSRSPSTYTSKRSREGNTRGRGRGRQGRAGSSGGREQRRRRRSFSTSPDSSKRVRRESPKYRGVSPSEVGKQLRSVGAKHSGRLGRLLEEARDPPVILVRGDANTLKCFRNRARNKYRGLFRSFSTTFSWVAGDSIERLGRSRMLISFSCLTQRRDFDDAVKYPKGVEWSYGSLDSL.

Residues 1–215 (MKLKMLLLSS…EVGKQLRSVG (215 aa)) form a disordered region. Residues 20–38 (TDPDTSSKTPTTTTAATDT) show a composition bias toward low complexity. Positions 41–52 (RRQSINKQSQQT) are enriched in polar residues. Positions 57 to 83 (RGYGRRPSSRTRRPQTHQRRSRSRSRS) are enriched in basic residues. Composition is skewed to low complexity over residues 84-106 (RSSS…RSTS) and 119-148 (TSRS…TYTS). Positions 188 to 198 (SSKRVRRESPK) are enriched in basic and acidic residues.

The protein belongs to the papillomaviridae E8^E2C protein family.

It is found in the host nucleus. In terms of biological role, plays a role in limiting the replication of viral DNA in keratinocytes. Recruits the host NCoR/SMRT complex to viral replication foci to mediate repression of both viral replication and transcription. The polypeptide is Protein E8^E2C (Human papillomavirus 47).